The chain runs to 62 residues: Andropin (62 aa).

Residues 1 to 22 form the signal peptide; it reads MKYFSVLVVLTLILAIVDQSDA.

It belongs to the andropin family. Ejaculatory duct of adult males.

The protein localises to the secreted. Functionally, male-specific peptide with moderate activity against Gram-positive bacteria. The protein is Andropin (Anp) of Drosophila teissieri (Fruit fly).